Here is a 460-residue protein sequence, read N- to C-terminus: Bifunctional protein GlmU (460 aa).

Positions 1–237 (MSSNQYTAGA…DPDLLGVNTP (237 aa)) are pyrophosphorylase. Residues 13-16 (LAAG), Lys-27, Gln-78, and 83-84 (GT) each bind UDP-N-acetyl-alpha-D-glucosamine. A Mg(2+)-binding site is contributed by Asp-109. The UDP-N-acetyl-alpha-D-glucosamine site is built by Gly-146, Glu-160, Asn-177, and Asn-235. Asn-235 serves as a coordination point for Mg(2+). Positions 238–258 (AELMRSEELLRENIVTRHLHN) are linker. The tract at residues 259–460 (GVHVHAAGSV…QKNLRKTRHS (202 aa)) is N-acetyltransferase. UDP-N-acetyl-alpha-D-glucosamine-binding residues include Arg-341 and Lys-359. Catalysis depends on His-371, which acts as the Proton acceptor. Residues Tyr-374 and Asn-385 each coordinate UDP-N-acetyl-alpha-D-glucosamine. Residues Ala-388, 394-395 (NY), Ser-413, Ala-431, and Arg-448 each bind acetyl-CoA.

In the N-terminal section; belongs to the N-acetylglucosamine-1-phosphate uridyltransferase family. This sequence in the C-terminal section; belongs to the transferase hexapeptide repeat family. Homotrimer. It depends on Mg(2+) as a cofactor.

The protein localises to the cytoplasm. It catalyses the reaction alpha-D-glucosamine 1-phosphate + acetyl-CoA = N-acetyl-alpha-D-glucosamine 1-phosphate + CoA + H(+). It carries out the reaction N-acetyl-alpha-D-glucosamine 1-phosphate + UTP + H(+) = UDP-N-acetyl-alpha-D-glucosamine + diphosphate. It functions in the pathway nucleotide-sugar biosynthesis; UDP-N-acetyl-alpha-D-glucosamine biosynthesis; N-acetyl-alpha-D-glucosamine 1-phosphate from alpha-D-glucosamine 6-phosphate (route II): step 2/2. The protein operates within nucleotide-sugar biosynthesis; UDP-N-acetyl-alpha-D-glucosamine biosynthesis; UDP-N-acetyl-alpha-D-glucosamine from N-acetyl-alpha-D-glucosamine 1-phosphate: step 1/1. Its pathway is bacterial outer membrane biogenesis; LPS lipid A biosynthesis. Functionally, catalyzes the last two sequential reactions in the de novo biosynthetic pathway for UDP-N-acetylglucosamine (UDP-GlcNAc). The C-terminal domain catalyzes the transfer of acetyl group from acetyl coenzyme A to glucosamine-1-phosphate (GlcN-1-P) to produce N-acetylglucosamine-1-phosphate (GlcNAc-1-P), which is converted into UDP-GlcNAc by the transfer of uridine 5-monophosphate (from uridine 5-triphosphate), a reaction catalyzed by the N-terminal domain. The sequence is that of Bifunctional protein GlmU from Oleidesulfovibrio alaskensis (strain ATCC BAA-1058 / DSM 17464 / G20) (Desulfovibrio alaskensis).